A 517-amino-acid chain; its full sequence is Acetylcholine receptor subunit delta (517 aa).

A signal peptide spans 1 to 21; it reads MAGPVPTLGLLAALVVCGSWG. The Extracellular segment spans residues 22–245; that stretch reads LNEEQRLIQH…VTFYLIIRRK (224 aa). Residues asparagine 97, asparagine 164, and asparagine 190 are each glycosylated (N-linked (GlcNAc...) asparagine). Cysteine 151 and cysteine 165 form a disulfide bridge. 3 helical membrane-spanning segments follow: residues 246–270, 278–296, and 312–333; these read PLFY…VFYL, TSVA…LLIS, and FLLF…VLNI. Residues 334 to 471 lie on the Cytoplasmic side of the membrane; sequence HFRTPSTHVL…WNQVARTVDR (138 aa). Phosphotyrosine; by Tyr-kinases is present on tyrosine 390. Residues 472–490 form a helical membrane-spanning segment; that stretch reads LCLFVVTPVMVVGTAWIFL.

Belongs to the ligand-gated ion channel (TC 1.A.9) family. Acetylcholine receptor (TC 1.A.9.1) subfamily. Delta/CHRND sub-subfamily. As to quaternary structure, pentamer of two alpha chains, and one each of the beta, delta, and gamma (in immature muscle) or epsilon (in mature muscle) chains. The muscle heteropentamer composed of alpha-1, beta-1, delta, epsilon subunits interacts with the alpha-conotoxin ImII.

It is found in the postsynaptic cell membrane. The protein resides in the cell membrane. The enzyme catalyses K(+)(in) = K(+)(out). It carries out the reaction Na(+)(in) = Na(+)(out). After binding acetylcholine, the AChR responds by an extensive change in conformation that affects all subunits and leads to opening of an ion-conducting channel across the plasma membrane. The sequence is that of Acetylcholine receptor subunit delta (Chrnd) from Rattus norvegicus (Rat).